An 874-amino-acid chain; its full sequence is Alanine--tRNA ligase (874 aa).

4 residues coordinate Zn(2+): His-564, His-568, Cys-665, and His-669.

Belongs to the class-II aminoacyl-tRNA synthetase family. Zn(2+) serves as cofactor.

Its subcellular location is the cytoplasm. It catalyses the reaction tRNA(Ala) + L-alanine + ATP = L-alanyl-tRNA(Ala) + AMP + diphosphate. Functionally, catalyzes the attachment of alanine to tRNA(Ala) in a two-step reaction: alanine is first activated by ATP to form Ala-AMP and then transferred to the acceptor end of tRNA(Ala). Also edits incorrectly charged Ser-tRNA(Ala) and Gly-tRNA(Ala) via its editing domain. This chain is Alanine--tRNA ligase, found in Burkholderia orbicola (strain MC0-3).